We begin with the raw amino-acid sequence, 258 residues long: Hydroxyacylglutathione hydrolase (258 aa).

The Zn(2+) site is built by histidine 56, histidine 58, aspartate 60, histidine 61, histidine 112, aspartate 132, and histidine 170.

This sequence belongs to the metallo-beta-lactamase superfamily. Glyoxalase II family. In terms of assembly, monomer. Zn(2+) is required as a cofactor.

The enzyme catalyses an S-(2-hydroxyacyl)glutathione + H2O = a 2-hydroxy carboxylate + glutathione + H(+). It participates in secondary metabolite metabolism; methylglyoxal degradation; (R)-lactate from methylglyoxal: step 2/2. Functionally, thiolesterase that catalyzes the hydrolysis of S-D-lactoyl-glutathione to form glutathione and D-lactic acid. This is Hydroxyacylglutathione hydrolase from Pseudomonas paraeruginosa (strain DSM 24068 / PA7) (Pseudomonas aeruginosa (strain PA7)).